The following is a 580-amino-acid chain: Microcin-J25 export ATP-binding/permease protein McjD (580 aa).

A run of 6 helical transmembrane segments spans residues 25-45, 66-86, 143-163, 167-187, 261-281, and 286-306; these read FFSM…SPLI, VLLA…VFLF, VSQN…VVLS, WFSA…NTRL, AVIL…NGVV, and FIMI…IGAL. The ABC transmembrane type-1 domain occupies 25-312; sequence FFSMLFITSL…IGALLSEIRQ (288 aa). Residues 345 to 578 enclose the ABC transporter domain; it reads LSIRELSFSY…NEYISGLASV (234 aa). Residue 378–385 coordinates ATP; that stretch reads GPSGSGKS.

Belongs to the ABC transporter superfamily. In terms of assembly, homodimer.

Its subcellular location is the cell inner membrane. Functionally, is able to protect a cell, which harbors the plasmid pTUC100 encoding microcin J25, against microcin J25. Is required for microcin J25 export out of the producing cells. The polypeptide is Microcin-J25 export ATP-binding/permease protein McjD (mcjD) (Escherichia coli).